The sequence spans 120 residues: Secreted effector PIT2 (120 aa).

A signal peptide spans 1 to 25 (MLFRSAFVLLIVAFASACLVQHVQA). Residues 46–59 (KLNRRWWFGFTGSL) are PID14 protease inhibitor domain.

Interacts with host cysteine proteases CP1A, CP1B, XCP2 and CP2. Cleaved by host target papain-like cysteine proteases (PLCPs) to release the embedded inhibitor peptide PID14.

The protein resides in the secreted. In terms of biological role, secreted effector required for virulence. Functions as an inhibitor of a set of apoplastic maize papain-like cysteine proteases (PLCPs) including CP1A, CP1B, XCP2 and CP2, whose activity is directly linked with salicylic-acid-associated plant defenses. Acts as a substrate mimicking molecule for apoplastic PLCPs and its processing releases the embedded inhibitor peptide PID14, which in turn blocks PLCPs to modulate host immunity. The polypeptide is Secreted effector PIT2 (Mycosarcoma maydis (Corn smut fungus)).